A 360-amino-acid chain; its full sequence is Phenylalanine--tRNA ligase alpha subunit (360 aa).

Residue E255 participates in Mg(2+) binding.

It belongs to the class-II aminoacyl-tRNA synthetase family. Phe-tRNA synthetase alpha subunit type 1 subfamily. Tetramer of two alpha and two beta subunits. Mg(2+) is required as a cofactor.

The protein resides in the cytoplasm. It carries out the reaction tRNA(Phe) + L-phenylalanine + ATP = L-phenylalanyl-tRNA(Phe) + AMP + diphosphate + H(+). This chain is Phenylalanine--tRNA ligase alpha subunit, found in Rhizorhabdus wittichii (strain DSM 6014 / CCUG 31198 / JCM 15750 / NBRC 105917 / EY 4224 / RW1) (Sphingomonas wittichii).